A 289-amino-acid polypeptide reads, in one-letter code: Rhodopsin (289 aa).

The Extracellular segment spans residues 1-7 (YLVSPAA). Residues 8–32 (YAALGAYMFLLILIGFPVNFLTLYV) traverse the membrane as a helical segment. Topologically, residues 33-44 (TLEHKKLRTPLN) are cytoplasmic. Residues 45–67 (YILLNLAVADLFMVLGGFTTTMY) form a helical membrane-spanning segment. The Extracellular segment spans residues 68–81 (TSMHGYFVLGRLGC). The cysteines at positions 81 and 158 are disulfide-linked. Residues 82–104 (NLEGFFATLGGEIALWSLVVLAI) traverse the membrane as a helical segment. The 'Ionic lock' involved in activated form stabilization motif lies at 105 to 107 (ERW). Over 105–123 (ERWIVVCKPISKFRFTEDN) the chain is Cytoplasmic. The helical transmembrane segment at 124–144 (AIMGLAFSWVMALACAVPPLV) threads the bilayer. Residues 145–173 (GWLRYIPEGMQCTCGVDYYTRAEGFDNES) lie on the Extracellular side of the membrane. Asn171 carries an N-linked (GlcNAc...) asparagine glycan. The chain crosses the membrane as a helical span at residues 174-195 (FVIYMFIVHFLIPLSVIFFCYG). Residues 196 to 223 (RLLCAVKEAAAAQQESETTQRAEKEVSR) lie on the Cytoplasmic side of the membrane. The helical transmembrane segment at 224–245 (MVVIMVIGFLVCWLPYASVAWW) threads the bilayer. Residues 246 to 257 (IFCNQGSDFGPI) lie on the Extracellular side of the membrane. A helical membrane pass occupies residues 258 to 279 (FMTLPSFFAKRPAIYNPMIYIC). Residue Lys267 is modified to N6-(retinylidene)lysine. Residues 280 to 289 (MNKQFRHCMI) lie on the Cytoplasmic side of the membrane.

The protein belongs to the G-protein coupled receptor 1 family. Opsin subfamily. Post-translationally, phosphorylated on some or all of the serine and threonine residues present in the C-terminal region. Contains one covalently linked retinal chromophore.

It localises to the membrane. Its subcellular location is the cell projection. It is found in the cilium. The protein resides in the photoreceptor outer segment. Photoreceptor required for image-forming vision at low light intensity. While most salt water fish species use retinal as chromophore, most freshwater fish use 3-dehydroretinal, or a mixture of retinal and 3-dehydroretinal. Light-induced isomerization of 11-cis to all-trans retinal triggers a conformational change that activates signaling via G-proteins. Subsequent receptor phosphorylation mediates displacement of the bound G-protein alpha subunit by arrestin and terminates signaling. In Batrachocottus nikolskii (Fat sculpin), this protein is Rhodopsin (rho).